The primary structure comprises 174 residues: B3 domain-containing protein At2g31862 (174 aa).

Positions 1 to 71 (MWVNLSCMCH…KLYIALVPLD (71 aa)) form a DNA-binding region, TF-B3.

Its subcellular location is the nucleus. The polypeptide is B3 domain-containing protein At2g31862 (Arabidopsis thaliana (Mouse-ear cress)).